The primary structure comprises 316 residues: Cytochrome c biogenesis protein CcsA (316 aa).

7 consecutive transmembrane segments (helical) span residues 15-35 (FSIC…TTIL), 44-64 (GIIT…IYSG), 71-91 (LYES…VAYL), 142-162 (MILS…LLVI), 220-240 (VISL…VWAN), 247-267 (WSWD…AIYL), and 281-301 (AIVA…VNLL).

It belongs to the CcmF/CycK/Ccl1/NrfE/CcsA family. May interact with Ccs1.

It is found in the plastid. The protein resides in the chloroplast thylakoid membrane. In terms of biological role, required during biogenesis of c-type cytochromes (cytochrome c6 and cytochrome f) at the step of heme attachment. This Trachelium caeruleum (Blue throatwort) protein is Cytochrome c biogenesis protein CcsA.